The primary structure comprises 280 residues: Putative transcription factor kapC (280 aa).

The tract at residues 1–102 (MQPALAPHPS…GKRPLSTSKR (102 aa)) is disordered. The segment covering 39 to 49 (PQPPAPQPPHM) has biased composition (pro residues). Polar residues predominate over residues 79–89 (TQPDVTGQETP). Residues 96–159 (PLSTSKRAAQ…EYIINLQSRL (64 aa)) enclose the bZIP domain. Residues 97–120 (LSTSKRAAQNRAAQRAFRQRKEAH) form a basic motif region. The tract at residues 124-155 (LEGKVKAYENMGEAIKALQAENYQLREYIINL) is leucine-zipper. The tract at residues 169–280 (LPGNIDLSQP…EQTHGLPLIS (112 aa)) is disordered. Positions 197 to 211 (APPPTAPQQPQPPHA) are enriched in pro residues.

The protein belongs to the bZIP family.

Its subcellular location is the nucleus. In terms of biological role, putative transcription factor. The polypeptide is Putative transcription factor kapC (kapC) (Neosartorya fischeri (strain ATCC 1020 / DSM 3700 / CBS 544.65 / FGSC A1164 / JCM 1740 / NRRL 181 / WB 181) (Aspergillus fischerianus)).